The chain runs to 364 residues: Esculetin O-methyltransferase (364 aa).

Position 132 (N132) interacts with bergaptol. 6 residues coordinate S-adenosyl-L-homocysteine: G209, D232, D252, M253, M265, and K266. H270 provides a ligand contact to bergaptol. The active-site Proton acceptor is the H270.

This sequence belongs to the class I-like SAM-binding methyltransferase superfamily. Cation-independent O-methyltransferase family. COMT subfamily. In terms of assembly, homodimer. As to expression, expressed ubiquitously.

It catalyses the reaction bergaptol + S-adenosyl-L-methionine = bergapten + S-adenosyl-L-homocysteine. The catalysed reaction is xanthotoxol + S-adenosyl-L-methionine = xanthotoxin + S-adenosyl-L-homocysteine + H(+). It carries out the reaction esculetin + S-adenosyl-L-methionine = isoscopoletin + S-adenosyl-L-homocysteine + H(+). The enzyme catalyses esculetin + S-adenosyl-L-methionine = scopoletin + S-adenosyl-L-homocysteine + H(+). It participates in aromatic compound metabolism. The protein operates within secondary metabolite biosynthesis. With respect to regulation, inhibited by zinc Zn(2+), copper Cu(2+) and silver Ag(+) ions. Functionally, O-methyltransferase involved in the biosynthesis of methoxylated coumarins natural products such as isoscopoletin, scopoletin, xanthotoxin and bergapten, photosensitizers used for medical purpose such as treating psoriasis and vitiligo or facilitating resistance to microbial infection and other stresses. Catalyzes the methylation of esculetin, bergaptol and xanthotoxol, but seems inactive on scopoletin and isoscopoletin. The chain is Esculetin O-methyltransferase from Kitagawia praeruptora (Peucedanum praeruptorum).